Consider the following 448-residue polypeptide: tRNA modification GTPase MnmE (448 aa).

Residues Arg-22, Glu-83, and Arg-122 each contribute to the (6S)-5-formyl-5,6,7,8-tetrahydrofolate site. The 151-residue stretch at 219-369 folds into the TrmE-type G domain; it reads GVKTVIVGRP…LESEILKTLK (151 aa). Asn-229 contacts K(+). Residues 229-234, 248-254, and 273-276 contribute to the GTP site; these read NVGKSS, SDIAGTT, and DTAG. Ser-233 serves as a coordination point for Mg(2+). Residues Ser-248, Ile-250, and Thr-253 each coordinate K(+). Thr-254 is a binding site for Mg(2+). Residue Lys-448 participates in (6S)-5-formyl-5,6,7,8-tetrahydrofolate binding.

Belongs to the TRAFAC class TrmE-Era-EngA-EngB-Septin-like GTPase superfamily. TrmE GTPase family. As to quaternary structure, homodimer. Heterotetramer of two MnmE and two MnmG subunits. K(+) is required as a cofactor.

The protein localises to the cytoplasm. In terms of biological role, exhibits a very high intrinsic GTPase hydrolysis rate. Involved in the addition of a carboxymethylaminomethyl (cmnm) group at the wobble position (U34) of certain tRNAs, forming tRNA-cmnm(5)s(2)U34. This chain is tRNA modification GTPase MnmE, found in Acholeplasma laidlawii (strain PG-8A).